A 191-amino-acid chain; its full sequence is tRNA-specific adenosine deaminase 2 (191 aa).

Positions 20–145 (EETEKWMEEA…SVLNIASADL (126 aa)) constitute a CMP/dCMP-type deaminase domain. H71 contacts Zn(2+). E73 acts as the Proton donor in catalysis. Zn(2+) contacts are provided by C107 and C110.

It belongs to the cytidine and deoxycytidylate deaminase family. ADAT2 subfamily. It depends on Zn(2+) as a cofactor.

The enzyme catalyses adenosine(34) in tRNA + H2O + H(+) = inosine(34) in tRNA + NH4(+). Probably participates in deamination of adenosine-34 to inosine in many tRNAs. In Homo sapiens (Human), this protein is tRNA-specific adenosine deaminase 2 (ADAT2).